A 193-amino-acid chain; its full sequence is ATP synthase subunit delta (193 aa).

Belongs to the ATPase delta chain family. As to quaternary structure, F-type ATPases have 2 components, F(1) - the catalytic core - and F(0) - the membrane proton channel. F(1) has five subunits: alpha(3), beta(3), gamma(1), delta(1), epsilon(1). F(0) has three main subunits: a(1), b(2) and c(10-14). The alpha and beta chains form an alternating ring which encloses part of the gamma chain. F(1) is attached to F(0) by a central stalk formed by the gamma and epsilon chains, while a peripheral stalk is formed by the delta and b chains.

It is found in the cell inner membrane. In terms of biological role, f(1)F(0) ATP synthase produces ATP from ADP in the presence of a proton or sodium gradient. F-type ATPases consist of two structural domains, F(1) containing the extramembraneous catalytic core and F(0) containing the membrane proton channel, linked together by a central stalk and a peripheral stalk. During catalysis, ATP synthesis in the catalytic domain of F(1) is coupled via a rotary mechanism of the central stalk subunits to proton translocation. This protein is part of the stalk that links CF(0) to CF(1). It either transmits conformational changes from CF(0) to CF(1) or is implicated in proton conduction. The polypeptide is ATP synthase subunit delta (Allorhizobium ampelinum (strain ATCC BAA-846 / DSM 112012 / S4) (Agrobacterium vitis (strain S4))).